Reading from the N-terminus, the 139-residue chain is Endoribonuclease YbeY (139 aa).

Zn(2+) contacts are provided by His107, His111, and Asp117.

The protein belongs to the endoribonuclease YbeY family. The cofactor is Zn(2+).

The protein localises to the cytoplasm. Single strand-specific metallo-endoribonuclease involved in late-stage 70S ribosome quality control and in maturation of the 3' terminus of the 16S rRNA. This is Endoribonuclease YbeY from Bacteroides fragilis (strain ATCC 25285 / DSM 2151 / CCUG 4856 / JCM 11019 / LMG 10263 / NCTC 9343 / Onslow / VPI 2553 / EN-2).